The chain runs to 414 residues: Heterogeneous nuclear ribonucleoprotein F (414 aa).

The residue at position 1 (methionine 1) is an N-acetylmethionine. Residue methionine 2 is modified to N-acetylmethionine; in Heterogeneous nuclear ribonucleoprotein F, N-terminally processed. Residues 11-90 (FVVKLRGLPW…RYIEVFKSHR (80 aa)) enclose the RRM 1 domain. A Glycyl lysine isopeptide (Lys-Gly) (interchain with G-Cter in SUMO) cross-link involves residue lysine 72. An interaction with RNA region spans residues 81–86 (RYIEVF). Lysine 87 is covalently cross-linked (Glycyl lysine isopeptide (Lys-Gly) (interchain with G-Cter in SUMO2)). A phosphoserine mark is found at serine 104 and serine 161. The RRM 2 domain maps to 111–188 (GFVRLRGLPF…RYIEVFKSSQ (78 aa)). Lysine 167 is covalently cross-linked (Glycyl lysine isopeptide (Lys-Gly) (interchain with G-Cter in SUMO2)). The interval 179–184 (RYIEVF) is interaction with RNA. Lysine 185 is covalently cross-linked (Glycyl lysine isopeptide (Lys-Gly) (interchain with G-Cter in SUMO2)). Phosphoserine occurs at positions 187, 193, and 195. Residue lysine 200 is modified to N6-acetyllysine; alternate. Lysine 200 participates in a covalent cross-link: Glycyl lysine isopeptide (Lys-Gly) (interchain with G-Cter in SUMO2); alternate. Threonine 215 carries the post-translational modification Phosphothreonine. Lysine 224 is modified (N6-acetyllysine; alternate). Lysine 224 participates in a covalent cross-link: Glycyl lysine isopeptide (Lys-Gly) (interchain with G-Cter in SUMO2); alternate. Position 265 is a phosphoserine (serine 265). One can recognise an RRM 3 domain in the interval 289–366 (HCVHMRGLPY…IELFLNSTTG (78 aa)). Positions 355-360 (RYIELF) are interaction with RNA.

As to quaternary structure, identified in the spliceosome C complex. Interacts with AGO1, AGO2, TBP and TXNL4/DIM1. Sumoylated.

The protein localises to the nucleus. The protein resides in the nucleoplasm. In terms of biological role, component of the heterogeneous nuclear ribonucleoprotein (hnRNP) complexes which provide the substrate for the processing events that pre-mRNAs undergo before becoming functional, translatable mRNAs in the cytoplasm. Plays a role in the regulation of alternative splicing events. Binds G-rich sequences in pre-mRNAs and keeps target RNA in an unfolded state. This is Heterogeneous nuclear ribonucleoprotein F (HNRNPF) from Bos taurus (Bovine).